The sequence spans 574 residues: Membrane protein insertase YidC (574 aa).

The helical transmembrane segment at 6–26 threads the bilayer; the sequence is VFLIFAWLMVAALLWMEWGKE. The interval 65–85 is disordered; it reads QAGAPGKVPATSTTTATPAAA. Helical transmembrane passes span 350 to 370, 376 to 396, 447 to 467, 491 to 511, and 525 to 545; these read VIDYSRFSIMAIIGQGLFWVL, FLHNWGWAIVGLVVLLRLVLY, GGCLPLLIQMPIFFALYWVLV, FILPALNIAIMWATQKLTPTP, and PLVFGAMMAFVPSGLVLYWVV.

This sequence belongs to the OXA1/ALB3/YidC family. Type 1 subfamily. Interacts with the Sec translocase complex via SecD. Specifically interacts with transmembrane segments of nascent integral membrane proteins during membrane integration.

The protein localises to the cell inner membrane. Functionally, required for the insertion and/or proper folding and/or complex formation of integral membrane proteins into the membrane. Involved in integration of membrane proteins that insert both dependently and independently of the Sec translocase complex, as well as at least some lipoproteins. Aids folding of multispanning membrane proteins. The protein is Membrane protein insertase YidC of Xanthomonas oryzae pv. oryzae (strain PXO99A).